The following is a 331-amino-acid chain: Uroporphyrinogen decarboxylase (331 aa).

Residues 22–26, D71, Y145, S199, and H308 contribute to the substrate site; that span reads RQAGR.

This sequence belongs to the uroporphyrinogen decarboxylase family. In terms of assembly, homodimer.

The protein resides in the cytoplasm. It catalyses the reaction uroporphyrinogen III + 4 H(+) = coproporphyrinogen III + 4 CO2. It functions in the pathway porphyrin-containing compound metabolism; protoporphyrin-IX biosynthesis; coproporphyrinogen-III from 5-aminolevulinate: step 4/4. Catalyzes the decarboxylation of four acetate groups of uroporphyrinogen-III to yield coproporphyrinogen-III. The protein is Uroporphyrinogen decarboxylase of Picrophilus torridus (strain ATCC 700027 / DSM 9790 / JCM 10055 / NBRC 100828 / KAW 2/3).